The sequence spans 183 residues: uncharacterized protein (183 aa).

This is an uncharacterized protein from Methanocaldococcus jannaschii (strain ATCC 43067 / DSM 2661 / JAL-1 / JCM 10045 / NBRC 100440) (Methanococcus jannaschii).